A 331-amino-acid polypeptide reads, in one-letter code: Glyceraldehyde-3-phosphate dehydrogenase (331 aa).

NAD(+)-binding positions include 12 to 13, D34, R78, and T120; that span reads RI. Residues 149 to 151, T180, 209 to 210, and R232 contribute to the D-glyceraldehyde 3-phosphate site; these read SCT and TG. The active-site Nucleophile is the C150. N314 provides a ligand contact to NAD(+).

It belongs to the glyceraldehyde-3-phosphate dehydrogenase family. As to quaternary structure, homotetramer.

It is found in the cytoplasm. The enzyme catalyses D-glyceraldehyde 3-phosphate + phosphate + NAD(+) = (2R)-3-phospho-glyceroyl phosphate + NADH + H(+). It participates in carbohydrate degradation; glycolysis; pyruvate from D-glyceraldehyde 3-phosphate: step 1/5. Functionally, catalyzes the oxidative phosphorylation of glyceraldehyde 3-phosphate (G3P) to 1,3-bisphosphoglycerate (BPG) using the cofactor NAD. The first reaction step involves the formation of a hemiacetal intermediate between G3P and a cysteine residue, and this hemiacetal intermediate is then oxidized to a thioester, with concomitant reduction of NAD to NADH. The reduced NADH is then exchanged with the second NAD, and the thioester is attacked by a nucleophilic inorganic phosphate to produce BPG. The chain is Glyceraldehyde-3-phosphate dehydrogenase (gapA) from Salmonella typhi.